A 282-amino-acid polypeptide reads, in one-letter code: ESX-1 secretion-associated protein EspG1 (282 aa).

Belongs to the EspG family. Interacts specifically with ESX-1-dependent PE/PPE proteins.

It is found in the cytoplasm. Functionally, part of the ESX-1 / type VII specialized secretion system (T7SS), which exports several proteins including EsxA and EsxB. Specific chaperone for cognate PE/PPE proteins, plays an important role in preventing aggregation of PE/PPE dimers. Also plays a role in DNA conjugation, in at least recipient strain. The protein is ESX-1 secretion-associated protein EspG1 of Mycolicibacterium smegmatis (strain ATCC 700084 / mc(2)155) (Mycobacterium smegmatis).